The sequence spans 137 residues: Phospholipase A2 homolog PLA2-03 (137 aa).

Positions 1-16 are cleaved as a signal peptide; that stretch reads MRTLWIVAVLLVGVEG. 7 cysteine pairs are disulfide-bonded: C42/C131, C44/C60, C59/C111, C65/C137, C66/C104, C73/C97, and C91/C102. Residues 121-133 are important for membrane-damaging activities in eukaryotes and bacteria; heparin-binding; the sequence is KKYKIFPKFLCKK.

This sequence belongs to the phospholipase A2 family. Group II subfamily. K49 sub-subfamily. Expressed by the venom gland.

It localises to the secreted. Snake venom phospholipase A2 homolog that lacks enzymatic activity. Is myotoxic and displays edema-inducing activities in mouse paw. A model of myotoxic mechanism has been proposed: an apo Lys49-PLA2 is activated by the entrance of a hydrophobic molecule (e.g. fatty acid) at the hydrophobic channel of the protein leading to a reorientation of a monomer. This reorientation causes a transition between 'inactive' to 'active' states, causing alignment of C-terminal and membrane-docking sites (MDoS) side-by-side and putting the membrane-disruption sites (MDiS) in the same plane, exposed to solvent and in a symmetric position for both monomers. The MDoS region stabilizes the toxin on membrane by the interaction of charged residues with phospholipid head groups. Subsequently, the MDiS region destabilizes the membrane with penetration of hydrophobic residues. This insertion causes a disorganization of the membrane, allowing an uncontrolled influx of ions (i.e. calcium and sodium), and eventually triggering irreversible intracellular alterations and cell death. This Ovophis okinavensis (Ryukyu Island pit viper) protein is Phospholipase A2 homolog PLA2-03.